The primary structure comprises 114 residues: Ribonuclease P protein component (114 aa).

It belongs to the RnpA family. Consists of a catalytic RNA component (M1 or rnpB) and a protein subunit.

It carries out the reaction Endonucleolytic cleavage of RNA, removing 5'-extranucleotides from tRNA precursor.. Its function is as follows. RNaseP catalyzes the removal of the 5'-leader sequence from pre-tRNA to produce the mature 5'-terminus. It can also cleave other RNA substrates such as 4.5S RNA. The protein component plays an auxiliary but essential role in vivo by binding to the 5'-leader sequence and broadening the substrate specificity of the ribozyme. In Legionella pneumophila (strain Paris), this protein is Ribonuclease P protein component.